Here is a 35-residue protein sequence, read N- to C-terminus: Photosystem II reaction center protein T (35 aa).

A helical membrane pass occupies residues 3-23; that stretch reads ALVYTFLLVGTLGIIFFAIFF.

It belongs to the PsbT family. As to quaternary structure, PSII is composed of 1 copy each of membrane proteins PsbA, PsbB, PsbC, PsbD, PsbE, PsbF, PsbH, PsbI, PsbJ, PsbK, PsbL, PsbM, PsbT, PsbY, PsbZ, Psb30/Ycf12, at least 3 peripheral proteins of the oxygen-evolving complex and a large number of cofactors. It forms dimeric complexes.

Its subcellular location is the plastid. The protein localises to the chloroplast thylakoid membrane. Functionally, found at the monomer-monomer interface of the photosystem II (PS II) dimer, plays a role in assembly and dimerization of PSII. PSII is a light-driven water plastoquinone oxidoreductase, using light energy to abstract electrons from H(2)O, generating a proton gradient subsequently used for ATP formation. This chain is Photosystem II reaction center protein T, found in Chaetosphaeridium globosum (Charophycean green alga).